Consider the following 447-residue polypeptide: MREIVHLQTGQCGNQIGAAFWQNISGEHGLDSNGVYNGTSELQLERMSVYFNEASGNKYVPRAVLVDLEPGTMDAVRAGPFGQLFRPDNFVFGQSGAGNNWAKGHYTEGAELVDQVLDVVRREAEGCDCLQGFQITHSLGGGTGAGMGTLLISKIREEFPDRMMATFSVVPSPKVSDTVVEPYNATLSVHQLVENSDETFCIDNEALYDICMRTLKLSNPSYGDLNHLVSAVMSGVTTCLRFPGQLNSDLRKLAVNMVPFPRLHFFMVGFAPLTSRGAHSFRAVSVPELTQQMFDPKNMMAASDFRNGRYLTCSAIFRGKVAMKDVEDQMRNVQNKNSSYFVEWIPNNVQTALCSIPPRGLKMSSTFVGNATAIQELFKRVGEQFTAMFRRKAFLHWYTGEGMDEMEFTEAESNMNDLVSEYQQYQDAGVDEEEEEYEEEAPLEEEV.

Gln11, Glu69, Ser138, Gly142, Thr143, Gly144, Asn204, and Asn226 together coordinate GTP. Glu69 lines the Mg(2+) pocket. Residues 426 to 447 (QDAGVDEEEEEYEEEAPLEEEV) are disordered. The segment covering 429 to 447 (GVDEEEEEYEEEAPLEEEV) has biased composition (acidic residues).

This sequence belongs to the tubulin family. As to quaternary structure, dimer of alpha and beta chains. A typical microtubule is a hollow water-filled tube with an outer diameter of 25 nm and an inner diameter of 15 nM. Alpha-beta heterodimers associate head-to-tail to form protofilaments running lengthwise along the microtubule wall with the beta-tubulin subunit facing the microtubule plus end conferring a structural polarity. Microtubules usually have 13 protofilaments but different protofilament numbers can be found in some organisms and specialized cells. It depends on Mg(2+) as a cofactor.

It is found in the cytoplasm. The protein localises to the cytoskeleton. Tubulin is the major constituent of microtubules, a cylinder consisting of laterally associated linear protofilaments composed of alpha- and beta-tubulin heterodimers. Microtubules grow by the addition of GTP-tubulin dimers to the microtubule end, where a stabilizing cap forms. Below the cap, tubulin dimers are in GDP-bound state, owing to GTPase activity of alpha-tubulin. The chain is Tubulin beta-2 chain (TUB2) from Colletotrichum gloeosporioides (Anthracnose fungus).